A 428-amino-acid polypeptide reads, in one-letter code: Light-independent protochlorophyllide reductase subunit N (428 aa).

Residues C29, C54, and C115 each contribute to the [4Fe-4S] cluster site.

It belongs to the BchN/ChlN family. Protochlorophyllide reductase is composed of three subunits; BchL, BchN and BchB. Forms a heterotetramer of two BchB and two BchN subunits. [4Fe-4S] cluster is required as a cofactor.

It carries out the reaction chlorophyllide a + oxidized 2[4Fe-4S]-[ferredoxin] + 2 ADP + 2 phosphate = protochlorophyllide a + reduced 2[4Fe-4S]-[ferredoxin] + 2 ATP + 2 H2O. The protein operates within porphyrin-containing compound metabolism; bacteriochlorophyll biosynthesis (light-independent). Its function is as follows. Component of the dark-operative protochlorophyllide reductase (DPOR) that uses Mg-ATP and reduced ferredoxin to reduce ring D of protochlorophyllide (Pchlide) to form chlorophyllide a (Chlide). This reaction is light-independent. The NB-protein (BchN-BchB) is the catalytic component of the complex. The polypeptide is Light-independent protochlorophyllide reductase subunit N (Cereibacter sphaeroides (strain ATCC 17023 / DSM 158 / JCM 6121 / CCUG 31486 / LMG 2827 / NBRC 12203 / NCIMB 8253 / ATH 2.4.1.) (Rhodobacter sphaeroides)).